The sequence spans 205 residues: uncharacterized protein (205 aa).

Belongs to the IIV-6 170L family.

This is an uncharacterized protein from Invertebrate iridescent virus 3 (IIV-3).